The sequence spans 493 residues: Growth-regulating factor 8 (493 aa).

Residues 149 to 184 (AFSEAQWHELERQRNIYKYMMASVPVPPELLTPFPK) form the QLQ domain. The region spanning 243 to 287 (DLEPWRCKRTDGKKWRCSRNVIPDQKYCERHTHKSRPRSRKHVES) is the WRC domain. Short sequence motifs (bipartite nuclear localization signal) lie at residues 248 to 258 (RCKRTDGKKWR) and 276 to 283 (KSRPRSRK). Positions 270–302 (CERHTHKSRPRSRKHVESSHQSSHHNDIRTAKN) are disordered. A compositionally biased stretch (basic residues) spans 273–283 (HTHKSRPRSRK).

Belongs to the GRF family. Predominantly expressed in shoot tips and flowers.

Its subcellular location is the nucleus. Its function is as follows. Transcription activator that plays a role in the regulation of cell expansion in leaf and cotyledons tissues. Component of a network formed by miR396, the GRFs and their interacting factors (GIFs) acting in the regulation of meristem function, at least partially through the control of cell proliferation. The chain is Growth-regulating factor 8 (GRF8) from Arabidopsis thaliana (Mouse-ear cress).